A 241-amino-acid polypeptide reads, in one-letter code: Probable transcriptional regulatory protein NE0210 (241 aa).

Belongs to the TACO1 family.

It is found in the cytoplasm. The sequence is that of Probable transcriptional regulatory protein NE0210 from Nitrosomonas europaea (strain ATCC 19718 / CIP 103999 / KCTC 2705 / NBRC 14298).